We begin with the raw amino-acid sequence, 500 residues long: NAD(P)H-quinone oxidoreductase chain 4, chloroplastic (500 aa).

14 consecutive transmembrane segments (helical) span residues 4 to 24 (FPWL…IFFL), 37 to 57 (ICIC…HFQL), 87 to 107 (IGPI…AWPI), 113 to 130 (LFHF…GSFS), 134 to 154 (LLLF…LLAM), 167 to 187 (FILY…GVAL), 208 to 228 (VLEI…LPII), 242 to 262 (HYST…YGLI), 272 to 292 (AHSI…IYAA), 305 to 325 (IAYS…SLTD), 330 to 350 (GALL…FLAG), 386 to 406 (LALP…GIIT), 411 to 431 (VLIP…LTPI), and 462 to 482 (LFLS…PDFV).

This sequence belongs to the complex I subunit 4 family.

The protein resides in the plastid. It localises to the chloroplast thylakoid membrane. It catalyses the reaction a plastoquinone + NADH + (n+1) H(+)(in) = a plastoquinol + NAD(+) + n H(+)(out). The catalysed reaction is a plastoquinone + NADPH + (n+1) H(+)(in) = a plastoquinol + NADP(+) + n H(+)(out). This Atropa belladonna (Belladonna) protein is NAD(P)H-quinone oxidoreductase chain 4, chloroplastic.